A 76-amino-acid polypeptide reads, in one-letter code: Small ribosomal subunit protein bS18 (76 aa).

This sequence belongs to the bacterial ribosomal protein bS18 family. As to quaternary structure, part of the 30S ribosomal subunit. Forms a tight heterodimer with protein bS6.

In terms of biological role, binds as a heterodimer with protein bS6 to the central domain of the 16S rRNA, where it helps stabilize the platform of the 30S subunit. The chain is Small ribosomal subunit protein bS18 from Stenotrophomonas maltophilia (strain R551-3).